Reading from the N-terminus, the 523-residue chain is Probable malate:quinone oxidoreductase (523 aa).

The protein belongs to the MQO family. FAD is required as a cofactor.

The enzyme catalyses (S)-malate + a quinone = a quinol + oxaloacetate. It participates in carbohydrate metabolism; tricarboxylic acid cycle; oxaloacetate from (S)-malate (quinone route): step 1/1. This is Probable malate:quinone oxidoreductase from Agrobacterium fabrum (strain C58 / ATCC 33970) (Agrobacterium tumefaciens (strain C58)).